A 151-amino-acid chain; its full sequence is D-aminoacyl-tRNA deacylase (151 aa).

The Gly-cisPro motif, important for rejection of L-amino acids signature appears at 137–138 (GP).

It belongs to the DTD family. As to quaternary structure, homodimer.

The protein resides in the cytoplasm. The catalysed reaction is glycyl-tRNA(Ala) + H2O = tRNA(Ala) + glycine + H(+). It carries out the reaction a D-aminoacyl-tRNA + H2O = a tRNA + a D-alpha-amino acid + H(+). In terms of biological role, an aminoacyl-tRNA editing enzyme that deacylates mischarged D-aminoacyl-tRNAs. Also deacylates mischarged glycyl-tRNA(Ala), protecting cells against glycine mischarging by AlaRS. Acts via tRNA-based rather than protein-based catalysis; rejects L-amino acids rather than detecting D-amino acids in the active site. By recycling D-aminoacyl-tRNA to D-amino acids and free tRNA molecules, this enzyme counteracts the toxicity associated with the formation of D-aminoacyl-tRNA entities in vivo and helps enforce protein L-homochirality. This chain is D-aminoacyl-tRNA deacylase, found in Solibacter usitatus (strain Ellin6076).